A 369-amino-acid chain; its full sequence is Chaperone protein DnaJ (369 aa).

Residues 5–69 (DYYDVLGISK…NKKAQYDRFG (65 aa)) form the J domain. The CR-type zinc finger occupies 131–213 (GTTKNVSVDI…CSGAGRVKAK (83 aa)). Residues cysteine 144, cysteine 147, cysteine 161, cysteine 164, cysteine 187, cysteine 190, cysteine 201, and cysteine 204 each coordinate Zn(2+). CXXCXGXG motif repeat units lie at residues 144–151 (CGHCHGSG), 161–168 (CSKCHGQG), 187–194 (CPQCQGEG), and 201–208 (CHVCSGAG).

This sequence belongs to the DnaJ family. In terms of assembly, homodimer. It depends on Zn(2+) as a cofactor.

The protein resides in the cytoplasm. Functionally, participates actively in the response to hyperosmotic and heat shock by preventing the aggregation of stress-denatured proteins and by disaggregating proteins, also in an autonomous, DnaK-independent fashion. Unfolded proteins bind initially to DnaJ; upon interaction with the DnaJ-bound protein, DnaK hydrolyzes its bound ATP, resulting in the formation of a stable complex. GrpE releases ADP from DnaK; ATP binding to DnaK triggers the release of the substrate protein, thus completing the reaction cycle. Several rounds of ATP-dependent interactions between DnaJ, DnaK and GrpE are required for fully efficient folding. Also involved, together with DnaK and GrpE, in the DNA replication of plasmids through activation of initiation proteins. The protein is Chaperone protein DnaJ of Acholeplasma laidlawii.